We begin with the raw amino-acid sequence, 436 residues long: GTPase Der (436 aa).

EngA-type G domains follow at residues 4 to 167 (PIVA…GEEE) and 176 to 351 (IRLS…ENHK). Residues 10–17 (GRPNVGKS), 57–61 (DTGGI), 119–122 (NKVD), 182–189 (GRPNVGKS), 229–233 (DTAGM), and 294–297 (NKWD) each bind GTP. Residues 352 to 436 (KRVQSSTLNE…PIHIIARKRN (85 aa)) form the KH-like domain.

This sequence belongs to the TRAFAC class TrmE-Era-EngA-EngB-Septin-like GTPase superfamily. EngA (Der) GTPase family. As to quaternary structure, associates with the 50S ribosomal subunit.

Its function is as follows. GTPase that plays an essential role in the late steps of ribosome biogenesis. The chain is GTPase Der from Staphylococcus aureus (strain Mu3 / ATCC 700698).